The sequence spans 249 residues: DNA repair protein RecO (249 aa).

It belongs to the RecO family.

In terms of biological role, involved in DNA repair and RecF pathway recombination. In Desulforudis audaxviator (strain MP104C), this protein is DNA repair protein RecO.